Reading from the N-terminus, the 425-residue chain is Serine--tRNA ligase (425 aa).

Residue 227-229 (TAE) coordinates L-serine. ATP is bound by residues 258–260 (RRE) and valine 274. Glutamate 281 lines the L-serine pocket. Residue 347 to 350 (ETHS) coordinates ATP. Threonine 382 is a binding site for L-serine.

It belongs to the class-II aminoacyl-tRNA synthetase family. Type-1 seryl-tRNA synthetase subfamily. As to quaternary structure, homodimer. The tRNA molecule binds across the dimer.

The protein localises to the cytoplasm. It carries out the reaction tRNA(Ser) + L-serine + ATP = L-seryl-tRNA(Ser) + AMP + diphosphate + H(+). The catalysed reaction is tRNA(Sec) + L-serine + ATP = L-seryl-tRNA(Sec) + AMP + diphosphate + H(+). The protein operates within aminoacyl-tRNA biosynthesis; selenocysteinyl-tRNA(Sec) biosynthesis; L-seryl-tRNA(Sec) from L-serine and tRNA(Sec): step 1/1. In terms of biological role, catalyzes the attachment of serine to tRNA(Ser). Is also able to aminoacylate tRNA(Sec) with serine, to form the misacylated tRNA L-seryl-tRNA(Sec), which will be further converted into selenocysteinyl-tRNA(Sec). The sequence is that of Serine--tRNA ligase from Deinococcus radiodurans (strain ATCC 13939 / DSM 20539 / JCM 16871 / CCUG 27074 / LMG 4051 / NBRC 15346 / NCIMB 9279 / VKM B-1422 / R1).